Here is a 198-residue protein sequence, read N- to C-terminus: dTTP/UTP pyrophosphatase (198 aa).

D75 acts as the Proton acceptor in catalysis.

The protein belongs to the Maf family. YhdE subfamily. The cofactor is a divalent metal cation.

The protein resides in the cytoplasm. It carries out the reaction dTTP + H2O = dTMP + diphosphate + H(+). It catalyses the reaction UTP + H2O = UMP + diphosphate + H(+). Functionally, nucleoside triphosphate pyrophosphatase that hydrolyzes dTTP and UTP. May have a dual role in cell division arrest and in preventing the incorporation of modified nucleotides into cellular nucleic acids. The sequence is that of dTTP/UTP pyrophosphatase from Wolbachia sp. subsp. Drosophila simulans (strain wRi).